A 123-amino-acid chain; its full sequence is Large ribosomal subunit protein uL18 (123 aa).

Belongs to the universal ribosomal protein uL18 family. In terms of assembly, part of the 50S ribosomal subunit; part of the 5S rRNA/L5/L18/L25 subcomplex. Contacts the 5S and 23S rRNAs.

This is one of the proteins that bind and probably mediate the attachment of the 5S RNA into the large ribosomal subunit, where it forms part of the central protuberance. The chain is Large ribosomal subunit protein uL18 from Chlamydia pneumoniae (Chlamydophila pneumoniae).